The chain runs to 299 residues: Tetrahydromethanopterin S-methyltransferase subunit E (299 aa).

The next 6 membrane-spanning stretches (helical) occupy residues 57-77 (AISG…SVAW), 80-100 (INAG…AAIV), 133-153 (IGPI…AAYL), 158-178 (LGNP…VGAI), 237-257 (GLCF…GNII), and 261-281 (LVTK…AAMI).

This sequence belongs to the MtrE family. In terms of assembly, the complex is composed of 8 subunits; MtrA, MtrB, MtrC, MtrD, MtrE, MtrF, MtrG and MtrH.

It localises to the cell membrane. It carries out the reaction 5-methyl-5,6,7,8-tetrahydromethanopterin + coenzyme M + 2 Na(+)(in) = 5,6,7,8-tetrahydromethanopterin + methyl-coenzyme M + 2 Na(+)(out). It functions in the pathway one-carbon metabolism; methanogenesis from CO(2); methyl-coenzyme M from 5,10-methylene-5,6,7,8-tetrahydromethanopterin: step 2/2. Its function is as follows. Part of a complex that catalyzes the formation of methyl-coenzyme M and tetrahydromethanopterin from coenzyme M and methyl-tetrahydromethanopterin. This is an energy-conserving, sodium-ion translocating step. This is Tetrahydromethanopterin S-methyltransferase subunit E from Methanococcus vannielii (strain ATCC 35089 / DSM 1224 / JCM 13029 / OCM 148 / SB).